Consider the following 418-residue polypeptide: MLTKAPRGTKDILPSESYKWQYIEGLIREICDVYGFKEIRTPGFEHTELFLRGVGESTDIVRKEMYTFTDKGGRSITLKAEGTSPAVRAFIEHNLYAETQPTKLYYITPVYRYERPQSGRLREHHQFGVEIFGAKNASADAEVISVAMTLLKKLGLNNLELRINSVGCPVCRKNYNKVLKDFLKDNLEYLCDDCKVRYEINPLRVLDCKVESCQRITKDAPLITDYLCDDCKSHFEELQKYLDIMGYDYIIDPRIVRGLDYYTKTAFEIISKDIGAQGTVCGGGRYDGLIEECGGPSMPGVGFGMGLERLLLTLEQNGIEIPKPEGIDLFIAYVGEEAKLFTFALANKLRFNGLKVERDNMDRSLKAQMKYANKLNAKFAIVIGEEEMKENKVKLKNMRDGSEVEISIDEIEQRIKNI.

This sequence belongs to the class-II aminoacyl-tRNA synthetase family. Homodimer.

Its subcellular location is the cytoplasm. The catalysed reaction is tRNA(His) + L-histidine + ATP = L-histidyl-tRNA(His) + AMP + diphosphate + H(+). In Thermoanaerobacter sp. (strain X514), this protein is Histidine--tRNA ligase.